Here is a 720-residue protein sequence, read N- to C-terminus: Polyribonucleotide nucleotidyltransferase (720 aa).

Mg(2+) is bound by residues aspartate 484 and aspartate 490. In terms of domain architecture, KH spans 551-610 (PRMYKINIDPSKIGSVIGSGGKTIRSIIEQTNTTVDIENDGTVVIGATDEASAKKAIKII). Positions 620–688 (GSIYTGKVTR…NQGRVNLSHR (69 aa)) constitute an S1 motif domain. Positions 697-720 (PISRNRDSQPRRPGPFRPSDRSNS) are disordered.

This sequence belongs to the polyribonucleotide nucleotidyltransferase family. It depends on Mg(2+) as a cofactor.

The protein resides in the cytoplasm. It catalyses the reaction RNA(n+1) + phosphate = RNA(n) + a ribonucleoside 5'-diphosphate. Functionally, involved in mRNA degradation. Catalyzes the phosphorolysis of single-stranded polyribonucleotides processively in the 3'- to 5'-direction. The polypeptide is Polyribonucleotide nucleotidyltransferase (Dehalococcoides mccartyi (strain CBDB1)).